We begin with the raw amino-acid sequence, 343 residues long: MAKLKVGINGFGRIGRLVLRAGINNPNIEFVGINDLVPPDNLAYLLKYDSTHGRLRSQVETKDDGIVIDGHFIPCVSVRNPAELPWGKLGADYVVESTGLFTDSEGASKHLQAGARRVIISAPTKDPDRVRTLLVGVNHDLFDPSKDLIVSNASCTTNCLAPIAKVINDNFGLTEGLMTTVHAMTATQPTVDGPSKKDWRGGRGAAQNIIPSSTGAAKAVALVLPELKGKLTGMAFRVPTPDVSVVDLTFKTAKATSYKEICAAMKQASEGSLAGILGYTDEEVVSTDFQGDTHSSIFDAGAGIELNSNFFKVVAWYDNEWGYSNRVVDLMLSMVQKEQLAAV.

NAD(+) is bound by residues 13 to 14 (RI), Asp35, Arg79, and Ser121. Residues 154–156 (SCT), Thr185, 214–215 (TG), and Arg237 each bind D-glyceraldehyde 3-phosphate. The active-site Nucleophile is the Cys155. Asn319 is a binding site for NAD(+).

This sequence belongs to the glyceraldehyde-3-phosphate dehydrogenase family. Homotetramer.

The protein resides in the cytoplasm. It catalyses the reaction D-glyceraldehyde 3-phosphate + phosphate + NAD(+) = (2R)-3-phospho-glyceroyl phosphate + NADH + H(+). It participates in carbohydrate degradation; glycolysis; pyruvate from D-glyceraldehyde 3-phosphate: step 1/5. Functionally, catalyzes the oxidative phosphorylation of glyceraldehyde 3-phosphate (G3P) to 1,3-bisphosphoglycerate (BPG) using the cofactor NAD. The first reaction step involves the formation of a hemiacetal intermediate between G3P and a cysteine residue, and this hemiacetal intermediate is then oxidized to a thioester, with concomitant reduction of NAD to NADH. The reduced NADH is then exchanged with the second NAD, and the thioester is attacked by a nucleophilic inorganic phosphate to produce BPG. This is Glyceraldehyde-3-phosphate dehydrogenase 1 (gap1) from Nostoc sp. (strain PCC 7120 / SAG 25.82 / UTEX 2576).